The primary structure comprises 74 residues: UPF0352 protein HAPS_0210 (74 aa).

The protein belongs to the UPF0352 family.

In Glaesserella parasuis serovar 5 (strain SH0165) (Haemophilus parasuis), this protein is UPF0352 protein HAPS_0210.